Here is a 91-residue protein sequence, read N- to C-terminus: Acylphosphatase (91 aa).

The region spanning 3-91 is the Acylphosphatase-like domain; sequence KLRMNVQGRV…EETEQFKVIQ (89 aa). Residues arginine 18 and asparagine 36 contribute to the active site.

It belongs to the acylphosphatase family.

It catalyses the reaction an acyl phosphate + H2O = a carboxylate + phosphate + H(+). The protein is Acylphosphatase (acyP) of Enterococcus faecalis (strain ATCC 700802 / V583).